We begin with the raw amino-acid sequence, 368 residues long: Chaperone protein DnaJ (368 aa).

Positions 5 to 70 (DYYQVLGVPR…KKRKLYDTHG (66 aa)) constitute a J domain. The CR-type zinc-finger motif lies at 124–201 (GVERQIQIPT…CNGAGRVEDH (78 aa)). Residues Cys137, Cys140, Cys153, Cys156, Cys175, Cys178, Cys189, and Cys192 each contribute to the Zn(2+) site. 4 CXXCXGXG motif repeats span residues 137-144 (CTHCNGSG), 153-160 (CGTCRGSG), 175-182 (CPHCGGRG), and 189-196 (CKVCNGAG).

The protein belongs to the DnaJ family. Homodimer. The cofactor is Zn(2+).

The protein localises to the cytoplasm. Functionally, participates actively in the response to hyperosmotic and heat shock by preventing the aggregation of stress-denatured proteins and by disaggregating proteins, also in an autonomous, DnaK-independent fashion. Unfolded proteins bind initially to DnaJ; upon interaction with the DnaJ-bound protein, DnaK hydrolyzes its bound ATP, resulting in the formation of a stable complex. GrpE releases ADP from DnaK; ATP binding to DnaK triggers the release of the substrate protein, thus completing the reaction cycle. Several rounds of ATP-dependent interactions between DnaJ, DnaK and GrpE are required for fully efficient folding. Also involved, together with DnaK and GrpE, in the DNA replication of plasmids through activation of initiation proteins. In Xylella fastidiosa (strain M12), this protein is Chaperone protein DnaJ.